Reading from the N-terminus, the 724-residue chain is 4-alpha-glucanotransferase (724 aa).

Belongs to the disproportionating enzyme family.

The protein resides in the cytoplasm. It carries out the reaction Transfers a segment of a (1-&gt;4)-alpha-D-glucan to a new position in an acceptor, which may be glucose or a (1-&gt;4)-alpha-D-glucan.. The protein is 4-alpha-glucanotransferase (malQ) of Mycobacterium bovis (strain ATCC BAA-935 / AF2122/97).